A 328-amino-acid polypeptide reads, in one-letter code: AA9 family lytic polysaccharide monooxygenase A (328 aa).

An N-terminal signal peptide occupies residues 1 to 21; the sequence is MPSTKVAALSAVLALASTVAG. H22 contacts Cu(2+). H22 bears the Methylhistidine mark. 2 disulfides stabilise this stretch: C77–C199 and C118–C122. An N-linked (GlcNAc...) asparagine glycan is attached at N80. H107 serves as a coordination point for Cu(2+). N-linked (GlcNAc...) asparagine glycosylation is found at N121 and N159. Residues H185 and Q194 each coordinate O2. Y196 serves as a coordination point for Cu(2+). O-linked (Man...) serine glycans are attached at residues S235 and S237. Residues T238 and T245 are each glycosylated (O-linked (Man...) threonine).

This sequence belongs to the polysaccharide monooxygenase AA9 family. It depends on Cu(2+) as a cofactor. Post-translationally, the catalytically essential N-terminal histidine His-22 is post-translationally modified by methylation to prevent protonation of the histidine side chain, and protect the critical active site of the enzyme from oxidative damage.

The protein localises to the secreted. It catalyses the reaction [(1-&gt;4)-beta-D-glucosyl]n+m + reduced acceptor + O2 = 4-dehydro-beta-D-glucosyl-[(1-&gt;4)-beta-D-glucosyl]n-1 + [(1-&gt;4)-beta-D-glucosyl]m + acceptor + H2O.. Lytic polysaccharide monooxygenase (LPMO) that depolymerizes crystalline and amorphous polysaccharides via the oxidation of scissile alpha- or beta-(1-4)-glycosidic bonds, yielding C1 and C4 oxidation products. Catalysis by LPMOs requires the reduction of the active-site copper from Cu(II) to Cu(I) by a reducing agent and H(2)O(2) or O(2) as a cosubstrate. Shows activity on cellulosic substrates (Avicel, carboxymethylcellulose) and xylan. This Talaromyces verruculosus (Penicillium verruculosum) protein is AA9 family lytic polysaccharide monooxygenase A.